We begin with the raw amino-acid sequence, 467 residues long: Probable amino acid permease 7 (467 aa).

Residues 1–29 lie on the Cytoplasmic side of the membrane; it reads MDIKEDDESRVITPTELQLHDSVTARTGT. A helical membrane pass occupies residues 30 to 50; the sequence is LWTAVAHIITGVIGAGVLSLA. Topologically, residues 51–58 are extracellular; it reads WATAELGW. A helical membrane pass occupies residues 59 to 79; sequence IAGPAALIAFAGVTLLSAFLL. The Cytoplasmic segment spans residues 80-111; that stretch reads SDCYRFPDPNNGPLRLNSYSQAVKLYLGKKNE. The chain crosses the membrane as a helical span at residues 112-132; sequence IVCGVVVYISLFGCGIAYTIV. The Extracellular portion of the chain corresponds to 133–163; that stretch reads IATCSRAIMKSNCYHRNGHNATCSYGDNNNY. Transmembrane regions (helical) follow at residues 164 to 184 and 185 to 205; these read FMVLFGLTQIFMSQIPNFHNM and VWLSLVAAIMSFTYSFIGIGL. The Extracellular segment spans residues 206 to 231; that stretch reads ALGKIIENRKIEGSIRGIPAENRGEK. The helical transmembrane segment at 232 to 252 threads the bilayer; that stretch reads VWIVFQALGNIAFSYPFSIIL. Topologically, residues 253 to 274 are cytoplasmic; sequence LEIQDTLRSPPAEKQTMKKAST. The helical transmembrane segment at 275–295 threads the bilayer; the sequence is VAVFIQTFFFFCCGCFGYAAF. The Extracellular segment spans residues 296-312; it reads GDSTPGNLLTGFGFYEP. Residues 313 to 333 form a helical membrane-spanning segment; that stretch reads FWLVDFANACIVLHLVGGYQV. Residues 334–383 lie on the Cytoplasmic side of the membrane; it reads YSQPIFAAAERSLTKKYPENKFIARFYGFKLPLLRGETVRLNPMRMCLRT. 2 helical membrane-spanning segments follow: residues 384 to 404 and 405 to 425; these read MYVLITTGVAVMFPYFNEVLG and VVGALAFWPLAVYFPVEMCIL. Residues 426–443 are Cytoplasmic-facing; the sequence is QKKIRSWTRPWLLLRGFS. Residues 444-464 form a helical membrane-spanning segment; that stretch reads FVCLLVCLLSLVGSIYGLVGA. Residues 465 to 467 lie on the Extracellular side of the membrane; that stretch reads KFG.

This sequence belongs to the amino acid/polyamine transporter 2 family. Amino acid/auxin permease (AAAP) (TC 2.A.18.2) subfamily.

The protein localises to the cell membrane. Functionally, amino acid-proton symporter. Stereospecific transporter with a broad specificity for neutral amino acids. This is Probable amino acid permease 7 (AAP7) from Arabidopsis thaliana (Mouse-ear cress).